The chain runs to 140 residues: Nucleoside diphosphate kinase (140 aa).

Residues Lys11, Phe59, Arg87, Thr93, Arg104, and Asn114 each coordinate ATP. Catalysis depends on His117, which acts as the Pros-phosphohistidine intermediate.

The protein belongs to the NDK family. Homotetramer. The cofactor is Mg(2+).

The protein resides in the cytoplasm. The catalysed reaction is a 2'-deoxyribonucleoside 5'-diphosphate + ATP = a 2'-deoxyribonucleoside 5'-triphosphate + ADP. It carries out the reaction a ribonucleoside 5'-diphosphate + ATP = a ribonucleoside 5'-triphosphate + ADP. In terms of biological role, major role in the synthesis of nucleoside triphosphates other than ATP. The ATP gamma phosphate is transferred to the NDP beta phosphate via a ping-pong mechanism, using a phosphorylated active-site intermediate. The protein is Nucleoside diphosphate kinase of Rickettsia bellii (strain OSU 85-389).